Reading from the N-terminus, the 424-residue chain is Serine hydroxymethyltransferase (424 aa).

(6S)-5,6,7,8-tetrahydrofolate contacts are provided by residues leucine 126 and 130-132 (GHL). Lysine 235 carries the post-translational modification N6-(pyridoxal phosphate)lysine. Position 359-361 (359-361 (SPF)) interacts with (6S)-5,6,7,8-tetrahydrofolate.

Belongs to the SHMT family. As to quaternary structure, homodimer. Requires pyridoxal 5'-phosphate as cofactor.

It is found in the cytoplasm. It carries out the reaction (6R)-5,10-methylene-5,6,7,8-tetrahydrofolate + glycine + H2O = (6S)-5,6,7,8-tetrahydrofolate + L-serine. Its pathway is one-carbon metabolism; tetrahydrofolate interconversion. It functions in the pathway amino-acid biosynthesis; glycine biosynthesis; glycine from L-serine: step 1/1. Its function is as follows. Catalyzes the reversible interconversion of serine and glycine with tetrahydrofolate (THF) serving as the one-carbon carrier. This reaction serves as the major source of one-carbon groups required for the biosynthesis of purines, thymidylate, methionine, and other important biomolecules. Also exhibits THF-independent aldolase activity toward beta-hydroxyamino acids, producing glycine and aldehydes, via a retro-aldol mechanism. In Prochlorococcus marinus (strain MIT 9303), this protein is Serine hydroxymethyltransferase.